A 259-amino-acid chain; its full sequence is Proteasome subunit alpha (259 aa).

Residues proline 233–alanine 243 are compositionally biased toward low complexity. The tract at residues proline 233–aspartate 259 is disordered. Over residues proline 244–aspartate 259 the composition is skewed to basic and acidic residues.

It belongs to the peptidase T1A family. As to quaternary structure, the 20S proteasome core is composed of 14 alpha and 14 beta subunits that assemble into four stacked heptameric rings, resulting in a barrel-shaped structure. The two inner rings, each composed of seven catalytic beta subunits, are sandwiched by two outer rings, each composed of seven alpha subunits. The catalytic chamber with the active sites is on the inside of the barrel. Has a gated structure, the ends of the cylinder being occluded by the N-termini of the alpha-subunits. Is capped by the proteasome-associated ATPase, ARC.

Its subcellular location is the cytoplasm. The protein operates within protein degradation; proteasomal Pup-dependent pathway. Its activity is regulated as follows. The formation of the proteasomal ATPase ARC-20S proteasome complex, likely via the docking of the C-termini of ARC into the intersubunit pockets in the alpha-rings, may trigger opening of the gate for substrate entry. Interconversion between the open-gate and close-gate conformations leads to a dynamic regulation of the 20S proteasome proteolysis activity. Its function is as follows. Component of the proteasome core, a large protease complex with broad specificity involved in protein degradation. This is Proteasome subunit alpha from Rhodococcus opacus (strain B4).